Here is a 331-residue protein sequence, read N- to C-terminus: 7,8-didemethyl-8-hydroxy-5-deazariboflavin synthase (331 aa).

The Radical SAM core domain maps to isoleucine 6–asparagine 244. [4Fe-4S] cluster is bound by residues cysteine 20, cysteine 24, and cysteine 27.

The protein belongs to the radical SAM superfamily. CofG family. Consists of two subunits, CofG and CofH. [4Fe-4S] cluster is required as a cofactor.

It catalyses the reaction 5-amino-5-(4-hydroxybenzyl)-6-(D-ribitylimino)-5,6-dihydrouracil + S-adenosyl-L-methionine = 7,8-didemethyl-8-hydroxy-5-deazariboflavin + 5'-deoxyadenosine + L-methionine + NH4(+) + H(+). The protein operates within cofactor biosynthesis; coenzyme F0 biosynthesis. Catalyzes the radical-mediated synthesis of 7,8-didemethyl-8-hydroxy-5-deazariboflavin from 5-amino-5-(4-hydroxybenzyl)-6-(D-ribitylimino)-5,6-dihydrouracil. This Methanoculleus marisnigri (strain ATCC 35101 / DSM 1498 / JR1) protein is 7,8-didemethyl-8-hydroxy-5-deazariboflavin synthase.